The primary structure comprises 230 residues: MSLGNTTVVTTTVRNATPSLTLDAGTIERFLAHSHRRRYPTRTDVFRPGDPAGTLYYVISGSVSIIAEEDDDRELVLGYFGSGEFVGEMGLFIESDTREVILRTRTQCELAEISYERLQQLFQTSLSPDAPRILYAIGVQLSKRLLDTTRKASRLAFLDVTDRIVRTLHDLSKEPEAMSHPQGTQLRVSRQELARLVGCSREMAGRVLKKLQADGLLHARGKTVVLYGTR.

18 to 139 (PSLTLDAGTI…APRILYAIGV (122 aa)) serves as a coordination point for a nucleoside 3',5'-cyclic phosphate. Residues 158–230 (LDVTDRIVRT…GKTVVLYGTR (73 aa)) form the HTH crp-type domain. The H-T-H motif DNA-binding region spans 190 to 209 (RQELARLVGCSREMAGRVLK).

Homodimer.

Its subcellular location is the cytoplasm. Allosterically inhibited by cyclic di-GMP (c-di-GMP), which binds to Clp and abolishes its ability to bind its target gene promoter. In terms of biological role, global transcriptional regulator that regulates virulence factors production by activating or repressing the expression of a large set of genes in diffusible signal factor (DSF) pathway. The protein is CRP-like protein Clp (clp) of Xanthomonas campestris pv. campestris (strain 8004).